The chain runs to 729 residues: MAKIIWTRTDEAPLLATYSLKPVVEAFAATAGIEVETRDISLAGRILAQFADQLPEEQKVSDALAELGELAKTPEANIIKLPNISASVPQLKAAVKELQEQGYDLPEYEDAKDRYAAVIGSNVNPVLREGNSDRRAPVAVKNFVKKFPHRMGEWSADSKTNVATMGADDFRSNEKSVIMDEADTVVIKHVAADGTETVLKDSLPLLKGEVIDGTFISAKALDAFLLDQVKRAKEEGILFSAHMKATMMKVSDPIIFGHIVRAYFADVYAQYGEQLLAAGLNGENGLAAIYAGLDKLDNGAEIKAAFDKGLEEGPDLAMVNSAKGITNLHVPSDVIIDASMPAMIRTSGKMWNKDDQTQDALAVIPDSSYAGVYQTVIEDCRKNGAFDPTTMGTVPNVGLMAQKAEEYGSHDKTFRIEADGKVQVVASNGDVLIEHDVEKGDIWRACQTKDAPIQDWVKLAVNRARLSGMPAVFWLDPARAHDRNLTTLVEKYLADHDTEGLDIQILSPVEATQHAIDRIRRGEDTISVTGNVLRDYNTDLFPILELGTSAKMLSVVPLMAGGGLFETGAGGSAPKHVQQVIEENHLRWDSLGEFLALAESFRHELNTRNNTKAGVLADALDRATEKLLNEEKSPSRKVGEIDNRGSHFWLATYWADELANQTEDAELAETFAPVAEALNNQAADIDAALIGEQGKPVDLGGYYAPSDEKTSAIMRPVAAFNEIIDSLKK.

NADP(+) is bound by residues Asn83 and Ser85. D-threo-isocitrate is bound by residues Ser121, Asn124, Arg128, Arg134, and Lys244. Asn124 contacts NADP(+). Asp337 contacts Mg(2+). Positions 407 and 534 each coordinate D-threo-isocitrate. Residues Asp535 and Asp539 each coordinate Mg(2+). The NADP(+) site is built by Ser572, His576, Arg587, Asp589, and Arg636.

It belongs to the monomeric-type IDH family. As to quaternary structure, monomer. Mg(2+) is required as a cofactor. Mn(2+) serves as cofactor.

It catalyses the reaction D-threo-isocitrate + NADP(+) = 2-oxoglutarate + CO2 + NADPH. Catalyzes the oxidative decarboxylation of isocitrate to 2-oxoglutarate and carbon dioxide with the concomitant reduction of NADP(+). The protein is Isocitrate dehydrogenase [NADP] of Corynebacterium efficiens (strain DSM 44549 / YS-314 / AJ 12310 / JCM 11189 / NBRC 100395).